The following is a 302-amino-acid chain: Small ribosomal subunit protein uS2 (302 aa).

The disordered stretch occupies residues E275–E302. Over residues A287–E302 the composition is skewed to basic residues.

This sequence belongs to the universal ribosomal protein uS2 family.

The polypeptide is Small ribosomal subunit protein uS2 (Opitutus terrae (strain DSM 11246 / JCM 15787 / PB90-1)).